Here is a 103-residue protein sequence, read N- to C-terminus: Large ribosomal subunit protein bL21 (103 aa).

It belongs to the bacterial ribosomal protein bL21 family. Part of the 50S ribosomal subunit. Contacts protein L20.

This protein binds to 23S rRNA in the presence of protein L20. The sequence is that of Large ribosomal subunit protein bL21 from Haemophilus ducreyi (strain 35000HP / ATCC 700724).